The sequence spans 343 residues: D-beta-hydroxybutyrate dehydrogenase, mitochondrial (343 aa).

The N-terminal 46 residues, 1–46 (MLAARLSRPLSQLPGKALSVRDRENGTRHTLLFYPASFSPDTRRTY), are a transit peptide targeting the mitochondrion. 60–84 (ITGCDSGFGFSLAKHLHSKGFLVFA) contributes to the NAD(+) binding site. Residues Lys73 and Lys97 each carry the N6-acetyllysine modification. The residue at position 103 (Lys103) is an N6-acetyllysine; alternate. Lys103 bears the N6-succinyllysine; alternate mark. Lys132 and Lys177 each carry N6-acetyllysine. Substrate is bound at residue Met196. Catalysis depends on Cys209, which acts as the Proton acceptor. Lys212 carries the N6-acetyllysine modification. Ser219 is a glycosylation site (O-linked (GlcNAc) serine). Ser246 carries the phosphoserine modification. Lys258 is subject to N6-acetyllysine. Lys259 is modified (N6-acetyllysine; alternate). Lys259 bears the N6-succinyllysine; alternate mark. Lys280 carries the post-translational modification N6-acetyllysine.

The protein belongs to the short-chain dehydrogenases/reductases (SDR) family. Homotetramer. In terms of processing, acetylation of Lys-132 is observed in liver mitochondria from fasted mice but not from fed mice.

Its subcellular location is the mitochondrion inner membrane. The protein localises to the mitochondrion matrix. It catalyses the reaction (R)-3-hydroxybutanoate + NAD(+) = acetoacetate + NADH + H(+). With respect to regulation, requires phosphatidylcholine as an allosteric activator for enzymatic activity. The chain is D-beta-hydroxybutyrate dehydrogenase, mitochondrial from Mus musculus (Mouse).